A 67-amino-acid chain; its full sequence is MAKIKMKTHRGAAKRFKVLKSGKVKRMKAYKSHLLTHKSSKRKRRLRKATYLEGASAKTIKRLLPYS.

It belongs to the bacterial ribosomal protein bL35 family.

This is Large ribosomal subunit protein bL35 from Caldanaerobacter subterraneus subsp. tengcongensis (strain DSM 15242 / JCM 11007 / NBRC 100824 / MB4) (Thermoanaerobacter tengcongensis).